The chain runs to 240 residues: tRNA (guanine-N(1)-)-methyltransferase (240 aa).

S-adenosyl-L-methionine contacts are provided by residues G108 and 127-132 (IGDYVL).

It belongs to the RNA methyltransferase TrmD family. As to quaternary structure, homodimer.

It localises to the cytoplasm. It catalyses the reaction guanosine(37) in tRNA + S-adenosyl-L-methionine = N(1)-methylguanosine(37) in tRNA + S-adenosyl-L-homocysteine + H(+). Functionally, specifically methylates guanosine-37 in various tRNAs. The chain is tRNA (guanine-N(1)-)-methyltransferase from Lactobacillus johnsonii (strain CNCM I-12250 / La1 / NCC 533).